Consider the following 286-residue polypeptide: Bifunctional protein FolD (286 aa).

Residues 165–167 (GRS) and S190 contribute to the NADP(+) site.

The protein belongs to the tetrahydrofolate dehydrogenase/cyclohydrolase family. In terms of assembly, homodimer.

It carries out the reaction (6R)-5,10-methylene-5,6,7,8-tetrahydrofolate + NADP(+) = (6R)-5,10-methenyltetrahydrofolate + NADPH. The enzyme catalyses (6R)-5,10-methenyltetrahydrofolate + H2O = (6R)-10-formyltetrahydrofolate + H(+). Its pathway is one-carbon metabolism; tetrahydrofolate interconversion. Its function is as follows. Catalyzes the oxidation of 5,10-methylenetetrahydrofolate to 5,10-methenyltetrahydrofolate and then the hydrolysis of 5,10-methenyltetrahydrofolate to 10-formyltetrahydrofolate. This chain is Bifunctional protein FolD, found in Burkholderia cenocepacia (strain ATCC BAA-245 / DSM 16553 / LMG 16656 / NCTC 13227 / J2315 / CF5610) (Burkholderia cepacia (strain J2315)).